A 499-amino-acid chain; its full sequence is ADP,ATP carrier protein 5 (499 aa).

Helical transmembrane passes span 25 to 45, 61 to 81, 93 to 113, 148 to 168, 183 to 203, 223 to 243, 286 to 306, 327 to 347, 356 to 376, 380 to 400, and 468 to 488; these read LGKFIPMSALMFCILFNQNIL, IAGFAKVYCVTPAAALFVIIY, IFYYLSAFFISFFVLFAFVIY, YIVYYSLAELWPNIFYVLLFW, FYTFFSLFGNSSLILVGFLMM, ITLVQVSTTIVAIVAIVCCVL, LWLLLICSAAFGFAINLVEAV, LYILWTGVAIMVMTIIGNNVM, AVISPVIIMVTGILFFVLIVF, ILSLFDGAILMSPLALAVSIG, and SISPILMVVFTFVCLAWIYAV.

Belongs to the ADP/ATP translocase tlc family.

The protein resides in the cell membrane. In terms of biological role, provides the rickettsial cell with host ATP in exchange for rickettsial ADP. This is an obligate exchange system. This energy acquiring activity is an important component of rickettsial parasitism. The polypeptide is ADP,ATP carrier protein 5 (tlcE) (Rickettsia felis (strain ATCC VR-1525 / URRWXCal2) (Rickettsia azadi)).